Consider the following 329-residue polypeptide: 4-hydroxythreonine-4-phosphate dehydrogenase (329 aa).

2 residues coordinate substrate: H136 and T137. Residues H166, H211, and H266 each coordinate a divalent metal cation. Residues K274, N283, and R292 each coordinate substrate.

Belongs to the PdxA family. Homodimer. Zn(2+) is required as a cofactor. Mg(2+) serves as cofactor. The cofactor is Co(2+).

It localises to the cytoplasm. It carries out the reaction 4-(phosphooxy)-L-threonine + NAD(+) = 3-amino-2-oxopropyl phosphate + CO2 + NADH. The protein operates within cofactor biosynthesis; pyridoxine 5'-phosphate biosynthesis; pyridoxine 5'-phosphate from D-erythrose 4-phosphate: step 4/5. In terms of biological role, catalyzes the NAD(P)-dependent oxidation of 4-(phosphooxy)-L-threonine (HTP) into 2-amino-3-oxo-4-(phosphooxy)butyric acid which spontaneously decarboxylates to form 3-amino-2-oxopropyl phosphate (AHAP). The sequence is that of 4-hydroxythreonine-4-phosphate dehydrogenase from Neisseria meningitidis serogroup A / serotype 4A (strain DSM 15465 / Z2491).